The following is a 180-amino-acid chain: Shikimate kinase (180 aa).

14–19 (GAGKSS) is an ATP binding site. Position 18 (Ser18) interacts with Mg(2+). Substrate contacts are provided by Asp36, Arg60, and Gly82. Arg120 contributes to the ATP binding site. Arg139 provides a ligand contact to substrate.

This sequence belongs to the shikimate kinase family. Monomer. Mg(2+) is required as a cofactor.

It is found in the cytoplasm. The enzyme catalyses shikimate + ATP = 3-phosphoshikimate + ADP + H(+). Its pathway is metabolic intermediate biosynthesis; chorismate biosynthesis; chorismate from D-erythrose 4-phosphate and phosphoenolpyruvate: step 5/7. Functionally, catalyzes the specific phosphorylation of the 3-hydroxyl group of shikimic acid using ATP as a cosubstrate. In Xylella fastidiosa (strain M23), this protein is Shikimate kinase.